The chain runs to 732 residues: Coagulation factor XIII A chain (732 aa).

A disordered region spans residues 1–27; it reads MSETSRTAFGGRRAVPPNNSNAAEDDL. At Ser-2 the chain carries N-acetylserine. Positions 2–38 are cleaved as a propeptide — activation peptide; that stretch reads SETSRTAFGGRRAVPPNNSNAAEDDLPTVELQGVVPR. Residues Cys-315, His-374, and Asp-397 contribute to the active site. Residues Asn-437, Asp-439, Glu-486, and Glu-491 each coordinate Ca(2+). The N-linked (GlcNAc...) asparagine glycan is linked to Asn-614.

This sequence belongs to the transglutaminase superfamily. Transglutaminase family. In terms of assembly, tetramer of two A chains (F13A1) and two B (F13B) chains. Requires Ca(2+) as cofactor. Post-translationally, the activation peptide is released by thrombin.

It localises to the cytoplasm. It is found in the secreted. The catalysed reaction is L-glutaminyl-[protein] + L-lysyl-[protein] = [protein]-L-lysyl-N(6)-5-L-glutamyl-[protein] + NH4(+). Functionally, factor XIII is activated by thrombin and calcium ion to a transglutaminase that catalyzes the formation of gamma-glutamyl-epsilon-lysine cross-links between fibrin chains, thus stabilizing the fibrin clot. Also cross-link alpha-2-plasmin inhibitor, or fibronectin, to the alpha chains of fibrin. This Homo sapiens (Human) protein is Coagulation factor XIII A chain (F13A1).